The following is a 745-amino-acid chain: DNA ligase (745 aa).

The disordered stretch occupies residues 1-27 (MRNHGPGSERKDACVSAPDPTFSDDVP). NAD(+) is bound by residues 57–61 (DAEYD), 106–107 (SL), and glutamate 135. The active-site N6-AMP-lysine intermediate is the lysine 137. NAD(+) is bound by residues arginine 158 and glutamate 197. Positions 216-235 (GKPPFANPRNAAAGSLRQKD) are disordered. NAD(+) is bound by residues lysine 313 and lysine 337. Zn(2+) is bound by residues cysteine 431, cysteine 434, cysteine 450, and cysteine 456. Residues 649–738 (DGPRLLDGIT…PEAARAARLS (90 aa)) form the BRCT domain.

The protein belongs to the NAD-dependent DNA ligase family. LigA subfamily. Mg(2+) serves as cofactor. Mn(2+) is required as a cofactor.

It carries out the reaction NAD(+) + (deoxyribonucleotide)n-3'-hydroxyl + 5'-phospho-(deoxyribonucleotide)m = (deoxyribonucleotide)n+m + AMP + beta-nicotinamide D-nucleotide.. Its function is as follows. DNA ligase that catalyzes the formation of phosphodiester linkages between 5'-phosphoryl and 3'-hydroxyl groups in double-stranded DNA using NAD as a coenzyme and as the energy source for the reaction. It is essential for DNA replication and repair of damaged DNA. In Thermobifida fusca (strain YX), this protein is DNA ligase.